The chain runs to 514 residues: Alpha-amylase (514 aa).

Residues 1–31 form the signal peptide; sequence MIQKRKRTVSFRLVLMCTLLFVSLPITKTSA. Residues asparagine 133, aspartate 190, alanine 212, aspartate 214, aspartate 225, aspartate 231, aspartate 233, and aspartate 235 each coordinate Ca(2+). Aspartate 190 contributes to the Na(+) binding site. The Na(+) site is built by aspartate 214, aspartate 225, and aspartate 231. Aspartate 262 acts as the Nucleophile in catalysis. Residue histidine 266 participates in Ca(2+) binding. Glutamate 292 serves as the catalytic Proton donor. The Ca(2+) site is built by glycine 331, aspartate 438, and aspartate 461.

The protein belongs to the glycosyl hydrolase 13 family. Monomer. Ca(2+) serves as cofactor. Na(+) is required as a cofactor.

It is found in the secreted. The enzyme catalyses Endohydrolysis of (1-&gt;4)-alpha-D-glucosidic linkages in polysaccharides containing three or more (1-&gt;4)-alpha-linked D-glucose units.. The polypeptide is Alpha-amylase (Bacillus amyloliquefaciens (Bacillus velezensis)).